Consider the following 349-residue polypeptide: DNA replication and repair protein RecF (349 aa).

ATP is bound at residue 30–37 (GKNGSGKT).

Belongs to the RecF family.

Its subcellular location is the cytoplasm. The RecF protein is involved in DNA metabolism; it is required for DNA replication and normal SOS inducibility. RecF binds preferentially to single-stranded, linear DNA. It also seems to bind ATP. This chain is DNA replication and repair protein RecF, found in Francisella tularensis subsp. mediasiatica (strain FSC147).